We begin with the raw amino-acid sequence, 347 residues long: Fe(2+) transport protein 1 (347 aa).

The signal sequence occupies residues 1-22; it reads MASNSALLMKTIFLVLIFVSFA. Residues 23–52 are Extracellular-facing; it reads ISPATSTAPEECGSESANPCVNKAKALPLK. The chain crosses the membrane as a helical span at residues 53–73; the sequence is VIAIFVILIASMIGVGAPLFS. Residues 74 to 84 are Cytoplasmic-facing; sequence RNVSFLQPDGN. Residues 85 to 105 traverse the membrane as a helical segment; the sequence is IFTIIKCFASGIILGTGFMHV. The Extracellular segment spans residues 106–125; that stretch reads LPDSFEMLSSICLEENPWHK. The chain crosses the membrane as a helical span at residues 126–146; the sequence is FPFSGFLAMLSGLITLAIDSM. The Cytoplasmic segment spans residues 147-192; it reads ATSLYTSKNAVGIMPHGHGHGHGPANDVTLPIKEDDSSNAQLLRYR. Glycyl lysine isopeptide (Lys-Gly) (interchain with G-Cter in ubiquitin) cross-links involve residues Lys154 and Lys179. Residues 193-213 traverse the membrane as a helical segment; it reads VIAMVLELGIIVHSVVIGLSL. Residues 214-224 are Extracellular-facing; that stretch reads GATSDTCTIKG. The chain crosses the membrane as a helical span at residues 225 to 245; it reads LIAALCFHQMFEGMGLGGCIL. Over 246–254 the chain is Cytoplasmic; the sequence is QAEYTNMKK. A helical transmembrane segment spans residues 255-275; sequence FVMAFFFAVTTPFGIALGIAL. Residues 276 to 286 are Extracellular-facing; the sequence is STVYQDNSPKA. A helical membrane pass occupies residues 287–307; that stretch reads LITVGLLNACSAGLLIYMALV. Residues 308-326 are Cytoplasmic-facing; the sequence is DLLAAEFMGPKLQGSIKMQ. The helical transmembrane segment at 327-347 threads the bilayer; it reads FKCLIAALLGCGGMSIIAKWA.

Belongs to the ZIP transporter (TC 2.A.5) family. As to quaternary structure, interacts with FREE1. Monoubiquitinated on several Lys residues. Monoubiquitination controls trafficking from the plasma membrane and targeting to the vacuole. Expressed in the external cell layers of the root including the lateral branching zone. Also detected in flowers before pollination.

The protein localises to the cell membrane. It localises to the early endosome. The protein resides in the golgi apparatus. It is found in the trans-Golgi network. Its subcellular location is the vacuole. Functionally, high-affinity iron transporter that plays a key role in the uptake of iron from the rhizosphere across the plasma membrane in the root epidermal layer. Acts as the principal regulator of iron homeostasis in planta. Also mediates the heavy metals uptake under iron-deficiency by its ability to transport cobalt, cadmium, manganese and/or zinc ions. The polypeptide is Fe(2+) transport protein 1 (IRT1) (Arabidopsis thaliana (Mouse-ear cress)).